Consider the following 492-residue polypeptide: Bifunctional protein GlmU (492 aa).

The segment at 1-241 (MTFRGDTAVL…NALVAGVNNR (241 aa)) is pyrophosphorylase. Residues 12-15 (LAAG), K26, Q83, 88-89 (GT), 112-114 (SGD), G151, E166, N181, and N239 each bind UDP-N-acetyl-alpha-D-glucosamine. Mg(2+) is bound at residue D114. Residue N239 coordinates Mg(2+). A linker region spans residues 242 to 262 (VQLAELSAELNRRIVATHQVA). Positions 263–492 (GVTIIDPATT…KQSQQKSEPD (230 aa)) are N-acetyltransferase. R344 and K362 together coordinate UDP-N-acetyl-alpha-D-glucosamine. H374 (proton acceptor) is an active-site residue. UDP-N-acetyl-alpha-D-glucosamine contacts are provided by Y377 and N388. Residues A391, 397–398 (NY), S416, and A434 contribute to the acetyl-CoA site. The segment at 461–492 (VQRKRPGSAAAQAAEKASTRTGKQSQQKSEPD) is disordered. Over residues 479–492 (TRTGKQSQQKSEPD) the composition is skewed to polar residues.

In the N-terminal section; belongs to the N-acetylglucosamine-1-phosphate uridyltransferase family. It in the C-terminal section; belongs to the transferase hexapeptide repeat family. In terms of assembly, homotrimer. The cofactor is Mg(2+).

The protein resides in the cytoplasm. It catalyses the reaction alpha-D-glucosamine 1-phosphate + acetyl-CoA = N-acetyl-alpha-D-glucosamine 1-phosphate + CoA + H(+). It carries out the reaction N-acetyl-alpha-D-glucosamine 1-phosphate + UTP + H(+) = UDP-N-acetyl-alpha-D-glucosamine + diphosphate. Its pathway is nucleotide-sugar biosynthesis; UDP-N-acetyl-alpha-D-glucosamine biosynthesis; N-acetyl-alpha-D-glucosamine 1-phosphate from alpha-D-glucosamine 6-phosphate (route II): step 2/2. It participates in nucleotide-sugar biosynthesis; UDP-N-acetyl-alpha-D-glucosamine biosynthesis; UDP-N-acetyl-alpha-D-glucosamine from N-acetyl-alpha-D-glucosamine 1-phosphate: step 1/1. The protein operates within bacterial outer membrane biogenesis; LPS lipid A biosynthesis. Functionally, catalyzes the last two sequential reactions in the de novo biosynthetic pathway for UDP-N-acetylglucosamine (UDP-GlcNAc). The C-terminal domain catalyzes the transfer of acetyl group from acetyl coenzyme A to glucosamine-1-phosphate (GlcN-1-P) to produce N-acetylglucosamine-1-phosphate (GlcNAc-1-P), which is converted into UDP-GlcNAc by the transfer of uridine 5-monophosphate (from uridine 5-triphosphate), a reaction catalyzed by the N-terminal domain. In Mycobacterium leprae (strain Br4923), this protein is Bifunctional protein GlmU.